Here is a 212-residue protein sequence, read N- to C-terminus: Proteasome subunit beta (212 aa).

The propeptide at 1–11 (MSQEHQDVKTG) is removed in mature form; by autocatalysis. Thr12 serves as the catalytic Nucleophile.

This sequence belongs to the peptidase T1B family. The 20S proteasome core is composed of 14 alpha and 14 beta subunits that assemble into four stacked heptameric rings, resulting in a barrel-shaped structure. The two inner rings, each composed of seven catalytic beta subunits, are sandwiched by two outer rings, each composed of seven alpha subunits. The catalytic chamber with the active sites is on the inside of the barrel. Has a gated structure, the ends of the cylinder being occluded by the N-termini of the alpha-subunits. Is capped at one or both ends by the proteasome regulatory ATPase, PAN.

Its subcellular location is the cytoplasm. It carries out the reaction Cleavage of peptide bonds with very broad specificity.. With respect to regulation, the formation of the proteasomal ATPase PAN-20S proteasome complex, via the docking of the C-termini of PAN into the intersubunit pockets in the alpha-rings, triggers opening of the gate for substrate entry. Interconversion between the open-gate and close-gate conformations leads to a dynamic regulation of the 20S proteasome proteolysis activity. Its function is as follows. Component of the proteasome core, a large protease complex with broad specificity involved in protein degradation. This chain is Proteasome subunit beta, found in Methanocorpusculum labreanum (strain ATCC 43576 / DSM 4855 / Z).